The chain runs to 175 residues: Translation initiation factor IF-3 (175 aa).

It belongs to the IF-3 family. In terms of assembly, monomer.

Its subcellular location is the cytoplasm. In terms of biological role, IF-3 binds to the 30S ribosomal subunit and shifts the equilibrium between 70S ribosomes and their 50S and 30S subunits in favor of the free subunits, thus enhancing the availability of 30S subunits on which protein synthesis initiation begins. This is Translation initiation factor IF-3 from Staphylococcus epidermidis (strain ATCC 35984 / DSM 28319 / BCRC 17069 / CCUG 31568 / BM 3577 / RP62A).